Consider the following 311-residue polypeptide: Ornithine carbamoyltransferase (311 aa).

Carbamoyl phosphate-binding positions include 52 to 55 (STRT), Q79, R103, and 129 to 132 (HPVQ). Residues N167, D226, and 230–231 (SM) contribute to the L-ornithine site. Carbamoyl phosphate is bound by residues 266–267 (CL) and R294.

It belongs to the aspartate/ornithine carbamoyltransferase superfamily. OTCase family.

It is found in the cytoplasm. It catalyses the reaction carbamoyl phosphate + L-ornithine = L-citrulline + phosphate + H(+). It participates in amino-acid biosynthesis; L-arginine biosynthesis; L-arginine from L-ornithine and carbamoyl phosphate: step 1/3. In terms of biological role, reversibly catalyzes the transfer of the carbamoyl group from carbamoyl phosphate (CP) to the N(epsilon) atom of ornithine (ORN) to produce L-citrulline. This is Ornithine carbamoyltransferase from Sorangium cellulosum (strain So ce56) (Polyangium cellulosum (strain So ce56)).